The following is a 116-amino-acid chain: uncharacterized protein (116 aa).

An N-acetylmuramoyl-L-alanine amidase domain is found at 2–73 (DGSVGTGRQV…PKALICGHRD (72 aa)).

To phage T3 and T7 N-acetylmuramoyl-L-alanine amidases.

This is an uncharacterized protein from Haemophilus influenzae (strain ATCC 51907 / DSM 11121 / KW20 / Rd).